Reading from the N-terminus, the 164-residue chain is UPF0114 protein YqhA (164 aa).

3 helical membrane passes run leucine 15–phenylalanine 35, leucine 53–valine 73, and leucine 136–leucine 156.

Belongs to the UPF0114 family.

The protein resides in the cell membrane. The chain is UPF0114 protein YqhA from Salmonella agona (strain SL483).